Here is a 323-residue protein sequence, read N- to C-terminus: Voltage-dependent calcium channel gamma-2 subunit (323 aa).

The chain crosses the membrane as a helical span at residues 10 to 30 (MLLTTVGAFAAFSLMTIAVGT). A glycan (N-linked (GlcNAc...) asparagine) is linked at asparagine 48. A run of 3 helical transmembrane segments spans residues 104-124 (SSIF…CIAA), 134-154 (IILS…IGII), and 182-202 (FGAL…HMFI). A disordered region spans residues 233 to 261 (YQRRSRSSSRSTEPSHSRDASPVGVKGFN). Serine 253 bears the Phosphoserine mark. Residue tyrosine 271 is modified to Phosphotyrosine. Threonine 321 is subject to Phosphothreonine; by PKA.

Belongs to the PMP-22/EMP/MP20 family. CACNG subfamily. In terms of assembly, the L-type calcium channel is composed of five subunits: alpha-1, alpha-2/delta, beta and gamma. Interacts with the PDZ domains of DLG4/PSD-95 and DLG1/SAP97. May interact with GOPC. Acts as an auxiliary subunit for AMPA-selective glutamate receptors (AMPARs). Found in a complex with GRIA1, GRIA2, GRIA3, GRIA4, CNIH2, CNIH3, CACNG3, CACNG4, CACNG5, CACNG7 and CACNG8. Interacts with GRIA1 and GRIA2. Interacts with MPP2. Post-translationally, phosphorylation of Thr-321 by PKA impairs interaction with DLG1 and DLG4. Brain.

The protein localises to the membrane. Its subcellular location is the synapse. It is found in the synaptosome. Its function is as follows. Regulates the trafficking and gating properties of AMPA-selective glutamate receptors (AMPARs). Promotes their targeting to the cell membrane and synapses and modulates their gating properties by slowing their rates of activation, deactivation and desensitization. Does not show subunit-specific AMPA receptor regulation and regulates all AMPAR subunits. Thought to stabilize the calcium channel in an inactivated (closed) state. In Mus musculus (Mouse), this protein is Voltage-dependent calcium channel gamma-2 subunit (Cacng2).